A 300-amino-acid chain; its full sequence is 4-diphosphocytidyl-2-C-methyl-D-erythritol kinase (300 aa).

Residue K22 is part of the active site. 105–115 (PMGGGLGGGSS) contributes to the ATP binding site. D147 is an active-site residue.

This sequence belongs to the GHMP kinase family. IspE subfamily.

It catalyses the reaction 4-CDP-2-C-methyl-D-erythritol + ATP = 4-CDP-2-C-methyl-D-erythritol 2-phosphate + ADP + H(+). It functions in the pathway isoprenoid biosynthesis; isopentenyl diphosphate biosynthesis via DXP pathway; isopentenyl diphosphate from 1-deoxy-D-xylulose 5-phosphate: step 3/6. Catalyzes the phosphorylation of the position 2 hydroxy group of 4-diphosphocytidyl-2C-methyl-D-erythritol. This chain is 4-diphosphocytidyl-2-C-methyl-D-erythritol kinase, found in Colwellia psychrerythraea (strain 34H / ATCC BAA-681) (Vibrio psychroerythus).